The sequence spans 117 residues: Acidic phospholipase A2 (117 aa).

Intrachain disulfides connect Cys11–Cys70, Cys25–Cys116, Cys27–Cys43, Cys42–Cys98, Cys49–Cys91, Cys59–Cys84, and Cys77–Cys89. Ca(2+) contacts are provided by Tyr26, Gly28, and Gly30. His46 is a catalytic residue. Asp47 serves as a coordination point for Ca(2+). Asn80 is a glycosylation site (N-linked (GlcNAc...) asparagine). Asp92 is an active-site residue.

Ca(2+) is required as a cofactor. As to expression, expressed by the venom gland.

The protein resides in the secreted. It carries out the reaction a 1,2-diacyl-sn-glycero-3-phosphocholine + H2O = a 1-acyl-sn-glycero-3-phosphocholine + a fatty acid + H(+). Functionally, snake venom phospholipase A2 (PLA2) that shows strong myotoxicity and induces edema in mice. Shows no cytotoxicity in vitro. Has a strong anticoagulant effect in vitro. PLA2 catalyzes the calcium-dependent hydrolysis of the 2-acyl groups in 3-sn-phosphoglycerides. The polypeptide is Acidic phospholipase A2 (Micrurus dumerilii (Coral snake)).